The sequence spans 178 residues: Inner membrane-spanning protein YciB (178 aa).

A run of 6 helical transmembrane segments spans residues 1 to 21, 23 to 43, 51 to 71, 77 to 97, 120 to 140, and 150 to 170; these read MKIL…KMTG, IIIA…FTWF, MHLV…LLGD, WKPT…QFIG, LNLA…YVAF, and FKLF…GIYL.

It belongs to the YciB family.

Its subcellular location is the cell inner membrane. Functionally, plays a role in cell envelope biogenesis, maintenance of cell envelope integrity and membrane homeostasis. This is Inner membrane-spanning protein YciB from Marinomonas sp. (strain MWYL1).